A 1004-amino-acid chain; its full sequence is ABC transporter G family member 25 (1004 aa).

The N-terminal stretch at 1–27 (MAASQLLAAAVAAAVFLAALLVPPARC) is a signal peptide. A helical transmembrane segment spans residues 271–291 (ATALFGGILIVILSVVLLLVY). Positions 343 to 373 (SDQLAASSNEARHATEGNGKRSKNRKKLAHA) are disordered. A compositionally biased stretch (basic and acidic residues) spans 352 to 361 (EARHATEGNG). Over residues 362–372 (KRSKNRKKLAH) the composition is skewed to basic residues. An ABC transporter domain is found at 419 to 659 (VVFKGLTLSI…FSSLGIKVPE (241 aa)). Position 451-458 (451-458 (GPSGAGKT)) interacts with ATP. 6 helical membrane passes run 776-796 (ATLQ…IGTI), 804-824 (FGVA…QLAA), 886-906 (LVFL…AIWF), 907-927 (ELGL…LVGT), 943-963 (WALE…WLIT), and 978-998 (FVLC…IALL).

It belongs to the ABC transporter superfamily. ABCG family. Eye pigment precursor importer (TC 3.A.1.204) subfamily.

It localises to the membrane. This Oryza sativa subsp. japonica (Rice) protein is ABC transporter G family member 25.